A 688-amino-acid polypeptide reads, in one-letter code: MSKDFLLEIGLEEMPAQYVTSSVLQLEKRVTDWLTENKIEFGEIKTYSTPRRLTVLVEGMAEEQANRVEEAKGPAKKIALDDEGNWSKAALGFAKSQKVDPADLTFRDIKGVEYIYIKKEVIGEKTSTLLPNLEKVVTSMTFPVSMHWGSNDLRYIRPIKWLIAMFGEEIIPFEITGVTTSNTSRGHRFLGKSATIKQPSDYPNALLEQFVVVNAEERKQAIVEQLRELESMENWQIKEDDDLLEEVTNLVEYPTVLSGNFEKEYLELPEEVLITTMKEHQRYFPVFSQAGELLPHFVTVRNGNHENLDTVARGNEKVLRARLSDADFFYQEDLKMTIDEAVAKLQNIVFHEKLGTLTEKMKRVQKVALMLADYLDWQEEDKQDIIRLTNIYKFDLVTNIVGEFPELQGLMGEKYALLQGEKPAIATAIREHYLPNSAEGELPQTDLGSLIAIADKLETLIGFFCVNIVPTGSADPFGLRRSAFGAMRIIQANGWDIPMLEVISRIVDMERAEGSAELPGADVKKEVQTFLKNRLRVILQGHHIRHDIIDAVIGGDPNVIPQLIDRAQILNEHAEAEWFRPTIEALSRVVKIAKKYEDGVEVDPALFENEYEQALFDKLEKLKFDYAGLTIIERLKAFADLRTTIDAYFDNTLVMSDNDELKNNRLALLFELASFIKEFAQMDEINVK.

This sequence belongs to the class-II aminoacyl-tRNA synthetase family. Tetramer of two alpha and two beta subunits.

Its subcellular location is the cytoplasm. It catalyses the reaction tRNA(Gly) + glycine + ATP = glycyl-tRNA(Gly) + AMP + diphosphate. The polypeptide is Glycine--tRNA ligase beta subunit (Listeria monocytogenes serotype 4a (strain HCC23)).